We begin with the raw amino-acid sequence, 313 residues long: tRNA dimethylallyltransferase (313 aa).

Residue 10–17 participates in ATP binding; the sequence is GPTASGKT. Substrate is bound at residue 12-17; sequence TASGKT. Interaction with substrate tRNA regions lie at residues 35-38, 159-163, and 240-245; these read DSAM, QRIQR, and RCVGYR.

Belongs to the IPP transferase family. Monomer. Mg(2+) serves as cofactor.

It catalyses the reaction adenosine(37) in tRNA + dimethylallyl diphosphate = N(6)-dimethylallyladenosine(37) in tRNA + diphosphate. Its function is as follows. Catalyzes the transfer of a dimethylallyl group onto the adenine at position 37 in tRNAs that read codons beginning with uridine, leading to the formation of N6-(dimethylallyl)adenosine (i(6)A). The protein is tRNA dimethylallyltransferase of Legionella pneumophila subsp. pneumophila (strain Philadelphia 1 / ATCC 33152 / DSM 7513).